A 503-amino-acid chain; its full sequence is GMP synthase [glutamine-hydrolyzing] (503 aa).

One can recognise a Glutamine amidotransferase type-1 domain in the interval 3–189 (PVLVVDFGSQ…AFLSSFAAPN (187 aa)). The active-site Nucleophile is the Cys-80. Residues His-165 and Glu-167 contribute to the active site. The GMPS ATP-PPase domain occupies 190–380 (WDPEQTICGT…LGIPKHIVHR (191 aa)). 217–223 (SGGVDSV) is a binding site for ATP.

In terms of assembly, homodimer.

It catalyses the reaction XMP + L-glutamine + ATP + H2O = GMP + L-glutamate + AMP + diphosphate + 2 H(+). It participates in purine metabolism; GMP biosynthesis; GMP from XMP (L-Gln route): step 1/1. Catalyzes the synthesis of GMP from XMP. The sequence is that of GMP synthase [glutamine-hydrolyzing] from Tropheryma whipplei (strain Twist) (Whipple's bacillus).